The following is a 103-amino-acid chain: Large ribosomal subunit protein eL14 (103 aa).

It belongs to the eukaryotic ribosomal protein eL14 family.

This chain is Large ribosomal subunit protein eL14, found in Pyrobaculum islandicum (strain DSM 4184 / JCM 9189 / GEO3).